Consider the following 421-residue polypeptide: Serine--tRNA ligase (421 aa).

231–233 (TGE) provides a ligand contact to L-serine. Position 262–264 (262–264 (RRE)) interacts with ATP. Glutamate 285 contacts L-serine. 349-352 (EVSS) provides a ligand contact to ATP. Position 384 (serine 384) interacts with L-serine.

It belongs to the class-II aminoacyl-tRNA synthetase family. Type-1 seryl-tRNA synthetase subfamily. As to quaternary structure, homodimer. The tRNA molecule binds across the dimer.

Its subcellular location is the cytoplasm. It carries out the reaction tRNA(Ser) + L-serine + ATP = L-seryl-tRNA(Ser) + AMP + diphosphate + H(+). The catalysed reaction is tRNA(Sec) + L-serine + ATP = L-seryl-tRNA(Sec) + AMP + diphosphate + H(+). Its pathway is aminoacyl-tRNA biosynthesis; selenocysteinyl-tRNA(Sec) biosynthesis; L-seryl-tRNA(Sec) from L-serine and tRNA(Sec): step 1/1. In terms of biological role, catalyzes the attachment of serine to tRNA(Ser). Is also able to aminoacylate tRNA(Sec) with serine, to form the misacylated tRNA L-seryl-tRNA(Sec), which will be further converted into selenocysteinyl-tRNA(Sec). The sequence is that of Serine--tRNA ligase from Methylacidiphilum infernorum (isolate V4) (Methylokorus infernorum (strain V4)).